Reading from the N-terminus, the 145-residue chain is MELLQVLKRGLQQVSGHGGLRGYLRVLFRANDVRVGTLVGEDKYGNKYYEDNKQFFGRHRWVIYTTEMNGKNTFWDVDGSMVPPEWHRWLHCMTDDPPTVKPPTARKFIWTNHKFNLSGTPQQYVPYSTTRKKIQEWVPPSTPYK.

Met-1 carries the N-acetylmethionine modification.

This sequence belongs to the complex I NDUFA12 subunit family. In terms of assembly, complex I is composed of 45 different subunits.

The protein resides in the mitochondrion inner membrane. Accessory subunit of the mitochondrial membrane respiratory chain NADH dehydrogenase (Complex I), that is believed not to be involved in catalysis. Complex I functions in the transfer of electrons from NADH to the respiratory chain. The immediate electron acceptor for the enzyme is believed to be ubiquinone. This is NADH dehydrogenase [ubiquinone] 1 alpha subcomplex subunit 12 (NDUFA12) from Bos taurus (Bovine).